We begin with the raw amino-acid sequence, 62 residues long: Alpha-elapitoxin-Nn2a (62 aa).

The segment at 1–20 (LECHNQQSSQTPTTTDCSGG) is disordered. Disulfide bonds link cysteine 3/cysteine 24, cysteine 17/cysteine 41, cysteine 43/cysteine 54, and cysteine 55/cysteine 60.

It belongs to the three-finger toxin family. Short-chain subfamily. Type I alpha-neurotoxin sub-subfamily. In terms of tissue distribution, expressed by the venom gland.

It localises to the secreted. Functionally, nicotinic acetylcholine receptor antagonist. Binds to muscle nicotinic acetylcholine receptor (nAChR) and inhibits acetylcholine from binding to the receptor, thereby impairing neuromuscular transmission. Produces peripheral paralysis by blocking neuromuscular transmission at the postsynaptic site. Induces concentration-dependent inhibition of indirect twitches and abolishes contractile responses of tissues to exogenous acetylcholine and carbachol, in the chick biventer cervicis nerve-muscle preparation at 100-300 nM (in vitro). Prior incubation of tissues with Indian polyvalent antivenom (1 ml/0.6 mg) prevents the neurotoxic effects at 100 nM (in vitro). Addition of Indian polyvalent antivenom (1 ml/0.6 mg) at the t90 time point does not reverse the neurotoxic effects (in vitro). Displays non-competitive antagonism of concentration-response curves to carbachol, with a pA2 of 8.01 (in vitro). The sequence is that of Alpha-elapitoxin-Nn2a from Naja naja (Indian cobra).